Here is a 727-residue protein sequence, read N- to C-terminus: E3 ubiquitin-protein ligase LRSAM1 (727 aa).

LRR repeat units follow at residues 30-51, 56-77, 82-103, 105-126, 128-150, and 151-172; these read ADDI…AFAT, QKKV…SCSL, TIKV…MGQL, VLQV…IGNL, QLQT…GELR, and SLRT…LAHV. The segment at 227 to 248 is disordered; the sequence is GAENTQDSPDGPASRFSREEAE. Position 234 is a phosphoserine (Ser-234). Coiled-coil stretches lie at residues 241 to 382 and 469 to 547; these read RFSR…NLRQ and RQIR…QENY. In terms of domain architecture, SAM spans 569–632; sequence GMERRLVALL…LRRAQDLLAV (64 aa). Ser-604 bears the Phosphoserine mark. 2 short sequence motifs (PTAP motif) span residues 653–656 and 665–668; these read PTAP and PSAP. The RING-type zinc finger occupies 679–714; the sequence is CVVCLEREAQMVFLTCGHVCCCQQCCQPLRTCPLCR.

In terms of assembly, interacts with TSG101. Interacts with PHF23. Interacts with FUS. In terms of processing, ubiquitination promoted by PHF23 leads to proteasomal degradation. In terms of tissue distribution, widely expressed.

It localises to the cytoplasm. The catalysed reaction is S-ubiquitinyl-[E2 ubiquitin-conjugating enzyme]-L-cysteine + [acceptor protein]-L-lysine = [E2 ubiquitin-conjugating enzyme]-L-cysteine + N(6)-ubiquitinyl-[acceptor protein]-L-lysine.. The protein operates within protein modification; protein ubiquitination. Functionally, E3 ubiquitin-protein ligase that mediates monoubiquitination of TSG101 at multiple sites, leading to inactivate the ability of TSG101 to sort endocytic (EGF receptors) and exocytic (viral proteins) cargos. Bacterial recognition protein that defends the cytoplasm from invasive pathogens. Localizes to several intracellular bacterial pathogens and generates the bacteria-associated ubiquitin signal leading to autophagy-mediated intracellular bacteria degradation (xenophagy). In Mus musculus (Mouse), this protein is E3 ubiquitin-protein ligase LRSAM1.